The following is a 492-amino-acid chain: MSKAFDLVIIGAGSGGLEAGWNAATLYKKRVAVVDVQTVHGPPFFAALGGTCVNVGCVPKKLMVTGAQYMDQLRESAGFGWEFDASTIKANWKTLIAAKNAAVLDINKSYEDMFKDTEGLEFFLGWGALEQKNVVTVREGADPKSKVKERLQAEHIIIATGSWPQMLKIPGIEHCISSNEAFYLEEPPRRVLTVGGGFISVEFAGIFNAYKPVGGKVTLCYRNNPILRGFDYTLRQELTKQLVANGIDIMTNENPSKIELNPDGSKHVTFESGKTLDVDVVMMAIGRLPRTGYLQLQTVGVNLTDKGAIQVDEFSRTNVPNIYAIGDVTGRIMLTPVAINEGASVVDTIFGSKPRKTDHTRVASAVFSIPPIGTCGLTEEEAAKSFEKVAVYLSCFTPLMHNISGSKYKKFVAKIITDHGDGTVVGVHLLGDSSPEIIQAVGICMKLNAKISDFYNTIGVHPTSAEELCSMRTPSHYYIKGEKMETLPDSSL.

35 to 52 (DVQTVHGPPFFAALGGTC) is a binding site for FAD. Cys52 and Cys57 are joined by a disulfide. Residue His461 is the Proton acceptor of the active site.

It belongs to the class-I pyridine nucleotide-disulfide oxidoreductase family. As to quaternary structure, homodimer. It depends on FAD as a cofactor.

The protein resides in the cytoplasm. It catalyses the reaction trypanothione + NADP(+) = trypanothione disulfide + NADPH + H(+). Functionally, trypanothione is the parasite analog of glutathione; this enzyme is the equivalent of glutathione reductase. This chain is Trypanothione reductase (TPR), found in Trypanosoma congolense.